Reading from the N-terminus, the 154-residue chain is Histidine-containing phosphotransfer protein 1 (154 aa).

The residue at position 1 (Met-1) is an N-acetylmethionine. Residues 38 to 143 (NPDFVSQVVT…FKLEQQIVAS (106 aa)) form the HPt domain. Position 79 is a phosphohistidine (His-79).

As to quaternary structure, interacts with the B-type response regulators ARR1, ARR2, ARR4 and ARR9. Binds to ETR1, AHK2, AHK3, AHK4, AHK5 and FBR12. Two-component system major event consists of a His-to-Asp phosphorelay between a sensor histidine kinase (HK) and a response regulator (RR). In plants, the His-to-Asp phosphorelay involves an additional intermediate named Histidine-containing phosphotransfer protein (HPt). This multistep phosphorelay consists of a His-Asp-His-Asp sequential transfer of a phosphate group between first a His and an Asp of the HK protein, followed by the transfer to a conserved His of the HPt protein and finally the transfer to an Asp in the receiver domain of the RR protein. In terms of tissue distribution, strongly expressed in roots.

Its subcellular location is the cytoplasm. The protein localises to the cytosol. The protein resides in the nucleus. Functionally, functions as a two-component phosphorelay mediators between cytokinin sensor histidine kinases and response regulator (B-type ARRs). Plays an important role in propagating cytokinin signal transduction through the multistep His-to-Asp phosphorelay. The protein is Histidine-containing phosphotransfer protein 1 (AHP1) of Arabidopsis thaliana (Mouse-ear cress).